A 237-amino-acid polypeptide reads, in one-letter code: Sugar fermentation stimulation protein homolog (237 aa).

It belongs to the SfsA family.

The chain is Sugar fermentation stimulation protein homolog from Actinobacillus pleuropneumoniae serotype 5b (strain L20).